The following is a 1196-amino-acid chain: RNA-dependent RNA polymerase 6 (1196 aa).

Belongs to the RdRP family. As to quaternary structure, interacts with SGS3. As to expression, widely expressed.

It is found in the cytoplasmic granule. The protein resides in the nucleus. It carries out the reaction RNA(n) + a ribonucleoside 5'-triphosphate = RNA(n+1) + diphosphate. RNA-dependent RNA polymerase involved in post-transcriptional gene silencing (PTGS). Possesses ssRNA and ssDNA-dependent polymerase activity, but does not have priming activity. Possesses in vitro 3' nucleotidyltransferase activity in the presence of UTP as single nucleotide. Required for the production of 21 nucleotide trans-acting small interfering RNAs (ta-siRNAs) derived from TAS1, TAS2 and TAS3 endogenous transcripts. Acts in the RDR6/SGS3/DCL4/AGO7 ta-siRNA pathway involved in leaf developmental timing. Required for the production of natural siRNAs (nat-siRNAs) derived from cis-natural antisense transcripts. Required for the production of 24 nucleotide nat-siRNAs derived from the stress-related P5CDH-SRO5 antisense gene pair. Required for PTGS induced by transgene direct repeats. Plays an essential role in transitive silencing of transgenes by processing secondary siRNAs. This pathway, which requires DCL2 and DCL4, amplifies silencing by using the target RNA as substrate to generate secondary siRNAs, providing an efficient mechanism for long-distance silencing. Involved in the biogenesis of secondary siRNAs which require 22 nucleotide miRNAs associated to AGO1. Participates synergistically with AS1 and AS2 to proper plant development by repressing the miR165 and miR166 microRNAs (independently of AGO10) that may lead to mRNA degradation of genes in the class III HD-ZIP family. Required for the production of some small RNAs derived from the crucifer-infecting tobamovirus (TMV-cg). Required for sense virus-induced post-transcriptional gene silencing (S-PTGS). The sequence is that of RNA-dependent RNA polymerase 6 (RDR6) from Arabidopsis thaliana (Mouse-ear cress).